Here is a 271-residue protein sequence, read N- to C-terminus: Formamidopyrimidine-DNA glycosylase (271 aa).

The Schiff-base intermediate with DNA role is filled by P2. Residue E3 is the Proton donor of the active site. K57 acts as the Proton donor; for beta-elimination activity in catalysis. The DNA site is built by H90, R109, and K151. The FPG-type zinc finger occupies 236–270 (HVYGRGGETCTQCGNLLSEIRLGQRTTVFCGICQT). R260 functions as the Proton donor; for delta-elimination activity in the catalytic mechanism.

Belongs to the FPG family. As to quaternary structure, monomer. It depends on Zn(2+) as a cofactor.

It catalyses the reaction Hydrolysis of DNA containing ring-opened 7-methylguanine residues, releasing 2,6-diamino-4-hydroxy-5-(N-methyl)formamidopyrimidine.. It carries out the reaction 2'-deoxyribonucleotide-(2'-deoxyribose 5'-phosphate)-2'-deoxyribonucleotide-DNA = a 3'-end 2'-deoxyribonucleotide-(2,3-dehydro-2,3-deoxyribose 5'-phosphate)-DNA + a 5'-end 5'-phospho-2'-deoxyribonucleoside-DNA + H(+). Involved in base excision repair of DNA damaged by oxidation or by mutagenic agents. Acts as a DNA glycosylase that recognizes and removes damaged bases. Has a preference for oxidized purines, such as 7,8-dihydro-8-oxoguanine (8-oxoG). Has AP (apurinic/apyrimidinic) lyase activity and introduces nicks in the DNA strand. Cleaves the DNA backbone by beta-delta elimination to generate a single-strand break at the site of the removed base with both 3'- and 5'-phosphates. This Shewanella sp. (strain MR-4) protein is Formamidopyrimidine-DNA glycosylase.